The chain runs to 173 residues: ATP-dependent protease subunit HslV (173 aa).

The active site involves T2. Na(+) contacts are provided by G158, D161, and S164.

This sequence belongs to the peptidase T1B family. HslV subfamily. In terms of assembly, a double ring-shaped homohexamer of HslV is capped on each side by a ring-shaped HslU homohexamer. The assembly of the HslU/HslV complex is dependent on binding of ATP.

It is found in the cytoplasm. It carries out the reaction ATP-dependent cleavage of peptide bonds with broad specificity.. Allosterically activated by HslU binding. In terms of biological role, protease subunit of a proteasome-like degradation complex believed to be a general protein degrading machinery. The protein is ATP-dependent protease subunit HslV of Glaesserella parasuis serovar 5 (strain SH0165) (Haemophilus parasuis).